The chain runs to 528 residues: Putative ABC transporter ATP-binding protein MA_1418 (528 aa).

ABC transporter domains lie at 2-242 (IELR…TNLT) and 262-494 (ISVK…SDYK). ATP contacts are provided by residues 36 to 43 (GHSAAGKT) and 294 to 301 (GENGSGKT).

This sequence belongs to the ABC transporter superfamily.

It localises to the cell membrane. Functionally, probably part of an ABC transporter complex. Responsible for energy coupling to the transport system. The polypeptide is Putative ABC transporter ATP-binding protein MA_1418 (Methanosarcina acetivorans (strain ATCC 35395 / DSM 2834 / JCM 12185 / C2A)).